The sequence spans 394 residues: Trans-enoyl reductase fumoC (394 aa).

Val-62 to Lys-65 lines the NADP(+) pocket. Residue Ala-152 to Met-159 coordinates substrate. Residues Ser-224 to Ser-227, Tyr-242, and Leu-289 to Asp-290 each bind NADP(+). Thr-309–Phe-313 lines the substrate pocket. Val-378–Lys-379 is a binding site for NADP(+).

Belongs to the zinc-containing alcohol dehydrogenase family. Monomer.

The protein operates within secondary metabolite biosynthesis. In terms of biological role, trans-enoyl reductase; part of the gene cluster that mediates the biosynthesis of fumosorinone, a 2-pyridone alkaloid that acts as an inhibitor of protein tyrosine phosphatase 1B which is implicated asa negative regulator of insulin receptor signaling and a potential drug target for the treatment of type II diabetes and other associated metabolic syndromes. The polyketide-amino acid backbone of fumosorinone is first assembled by the PKS-NRPS hybrid fumoS. The PKS modules condense one acetyl-CoA starter unit with 7 malonyl-CoA units, programmed C-methylations occurring after the first 3 and the sixth extensions, and cycles of full reduction occurring after the first 2 extensions. Because fumoS lacks a designated enoyl reductase (ER) domain, the required activity is provided the enoyl reductase fumoC. Upon formation of the polyketide backbone on the thiotemplate, the polyketide is transferred to the NRPS module and linked to tyrosine to produce the acyltetramic acid intermediate called prefumosorinone A. The cytochrome P450 monooxygenase fumoA then probably catalyzes an unprecedented oxidative ring expansion of prefumosorinone A to form prefumosorinone B which contains the 2-pyridone core of fumosorinone. The cytochrome P450 monooxygenase fumoB might hydroxylate the nitrogen of prefumosorinone B, but not the acyltetramic acid prefumosorinone A, to form fumosorinone. This chain is Trans-enoyl reductase fumoC, found in Cordyceps fumosorosea (strain ARSEF 2679) (Isaria fumosorosea).